A 193-amino-acid chain; its full sequence is Mediator of RNA polymerase II transcription subunit 30 (193 aa).

Residues 1–20 (MSTPPLAASGMAPGPFAGPQ) are disordered. Ser-2 bears the N-acetylserine mark. The segment covering 10–20 (GMAPGPFAGPQ) has biased composition (low complexity). A coiled-coil region spans residues 71–93 (YQDRLAKLQDHLRQLSILFRKLR).

Belongs to the Mediator complex subunit 30 family. Component of the Mediator complex, which is composed of MED1, MED4, MED6, MED7, MED8, MED9, MED10, MED11, MED12, MED13, MED13L, MED14, MED15, MED16, MED17, MED18, MED19, MED20, MED21, MED22, MED23, MED24, MED25, MED26, MED27, MED29, MED30, MED31, CCNC, CDK8 and CDC2L6/CDK11. The MED12, MED13, CCNC and CDK8 subunits form a distinct module termed the CDK8 module. Mediator containing the CDK8 module is less active than Mediator lacking this module in supporting transcriptional activation. Individual preparations of the Mediator complex lacking one or more distinct subunits have been variously termed ARC, CRSP, DRIP, PC2, SMCC and TRAP.

The protein localises to the nucleus. Component of the Mediator complex, a coactivator involved in the regulated transcription of nearly all RNA polymerase II-dependent genes. Mediator functions as a bridge to convey information from gene-specific regulatory proteins to the basal RNA polymerase II transcription machinery. Mediator is recruited to promoters by direct interactions with regulatory proteins and serves as a scaffold for the assembly of a functional preinitiation complex with RNA polymerase II and the general transcription factors. This is Mediator of RNA polymerase II transcription subunit 30 (MED30) from Bos taurus (Bovine).